We begin with the raw amino-acid sequence, 284 residues long: Cell division protein DivIB (284 aa).

Residues 1-21 (MFGKRKDSKNKAMRDNEELTP) form a disordered region. Topologically, residues 1-63 (MFGKRKDSKN…GLRKRRLQKR (63 aa)) are cytoplasmic. A helical transmembrane segment spans residues 64 to 84 (VITLASIFGISAIISLYAILP). Over 85–284 (VSRVSNIEIE…VGAYAYPYBK (200 aa)) the chain is Extracellular. A POTRA domain is found at 86–156 (SRVSNIEIEG…NVVKFKVTEY (71 aa)).

The protein belongs to the FtsQ/DivIB family. DivIB subfamily.

The protein resides in the cell membrane. Cell division protein that may be involved in stabilizing or promoting the assembly of the division complex. This Ligilactobacillus salivarius (strain CECT 5713) (Lactobacillus salivarius) protein is Cell division protein DivIB.